Consider the following 938-residue polypeptide: Isoleucine--tRNA ligase (938 aa).

A 'HIGH' region motif is present at residues 65–75; it reads PYANGSIHIGH. An L-isoleucyl-5'-AMP-binding site is contributed by Glu-568. The 'KMSKS' region signature appears at 609–613; sequence KMSKS. Lys-612 contacts ATP. Cys-905, Cys-908, Cys-921, and Cys-924 together coordinate Zn(2+).

It belongs to the class-I aminoacyl-tRNA synthetase family. IleS type 1 subfamily. Monomer. Requires Zn(2+) as cofactor.

It is found in the cytoplasm. The enzyme catalyses tRNA(Ile) + L-isoleucine + ATP = L-isoleucyl-tRNA(Ile) + AMP + diphosphate. Catalyzes the attachment of isoleucine to tRNA(Ile). As IleRS can inadvertently accommodate and process structurally similar amino acids such as valine, to avoid such errors it has two additional distinct tRNA(Ile)-dependent editing activities. One activity is designated as 'pretransfer' editing and involves the hydrolysis of activated Val-AMP. The other activity is designated 'posttransfer' editing and involves deacylation of mischarged Val-tRNA(Ile). In Mannheimia succiniciproducens (strain KCTC 0769BP / MBEL55E), this protein is Isoleucine--tRNA ligase.